The chain runs to 369 residues: UDP-3-O-(3-hydroxymyristoyl)glucosamine N-acyltransferase (369 aa).

Histidine 240 functions as the Proton acceptor in the catalytic mechanism.

It belongs to the transferase hexapeptide repeat family. LpxD subfamily. As to quaternary structure, homotrimer.

It carries out the reaction a UDP-3-O-[(3R)-3-hydroxyacyl]-alpha-D-glucosamine + a (3R)-hydroxyacyl-[ACP] = a UDP-2-N,3-O-bis[(3R)-3-hydroxyacyl]-alpha-D-glucosamine + holo-[ACP] + H(+). The catalysed reaction is UDP-3-O-[(3R)-3-hydroxytetradecanoyl]-alpha-D-glucosamine + (3R)-hydroxytetradecanoyl-[ACP] = UDP-2-N,3-O-bis[(3R)-3-hydroxytetradecanoyl]-alpha-D-glucosamine + holo-[ACP] + H(+). It participates in glycolipid biosynthesis; lipid IV(A) biosynthesis; lipid IV(A) from (3R)-3-hydroxytetradecanoyl-[acyl-carrier-protein] and UDP-N-acetyl-alpha-D-glucosamine: step 3/6. Its function is as follows. Catalyzes the N-acylation of UDP-3-O-(hydroxytetradecanoyl)glucosamine using 3-hydroxytetradecanoyl-ACP as the acyl donor. Is involved in the biosynthesis of lipid A, a phosphorylated glycolipid that anchors the lipopolysaccharide to the outer membrane of the cell. The protein is UDP-3-O-(3-hydroxymyristoyl)glucosamine N-acyltransferase of Blochmanniella floridana.